Reading from the N-terminus, the 177-residue chain is MSRVAKAPVVIPAGVEVKLNGQVISIKGKNGELTRTVHSAVEVKQEENTLTFAPREGAVDGWAQAGTTRALLNAMVIGVTEGFTKKLQLVGVGYRAAVKGNVVNLALGFSHPVDHELPAGITAECPTQTEIVLKGADKQVIGQVAADLRAYRRPEPYKGKGVRYADEVVRTKEAKKK.

This sequence belongs to the universal ribosomal protein uL6 family. As to quaternary structure, part of the 50S ribosomal subunit.

In terms of biological role, this protein binds to the 23S rRNA, and is important in its secondary structure. It is located near the subunit interface in the base of the L7/L12 stalk, and near the tRNA binding site of the peptidyltransferase center. This Yersinia enterocolitica serotype O:8 / biotype 1B (strain NCTC 13174 / 8081) protein is Large ribosomal subunit protein uL6.